An 85-amino-acid chain; its full sequence is Large ribosomal subunit protein bL27 (85 aa).

Residues 1 to 20 (MAHKKGGGTTRNGRDSESKR) form a disordered region.

The protein belongs to the bacterial ribosomal protein bL27 family.

This Herminiimonas arsenicoxydans protein is Large ribosomal subunit protein bL27.